A 464-amino-acid polypeptide reads, in one-letter code: Glutamate--tRNA ligase (464 aa).

Positions P10–G20 match the 'HIGH' region motif. Positions Q113–A130 are enriched in basic and acidic residues. A disordered region spans residues Q113–P142. Residues K242–R246 carry the 'KMSKS' region motif. An ATP-binding site is contributed by K245.

The protein belongs to the class-I aminoacyl-tRNA synthetase family. Glutamate--tRNA ligase type 1 subfamily. As to quaternary structure, monomer.

It is found in the cytoplasm. The catalysed reaction is tRNA(Glu) + L-glutamate + ATP = L-glutamyl-tRNA(Glu) + AMP + diphosphate. Functionally, catalyzes the attachment of glutamate to tRNA(Glu) in a two-step reaction: glutamate is first activated by ATP to form Glu-AMP and then transferred to the acceptor end of tRNA(Glu). In Dechloromonas aromatica (strain RCB), this protein is Glutamate--tRNA ligase.